A 425-amino-acid polypeptide reads, in one-letter code: UDP-N-acetylglucosamine 1-carboxyvinyltransferase (425 aa).

Phosphoenolpyruvate is bound at residue 22–23; it reads KN. Arg-93 contacts UDP-N-acetyl-alpha-D-glucosamine. The active-site Proton donor is Asp-117. The UDP-N-acetyl-alpha-D-glucosamine site is built by Asp-312 and Met-334.

This sequence belongs to the EPSP synthase family. MurA subfamily.

The protein localises to the cytoplasm. It catalyses the reaction phosphoenolpyruvate + UDP-N-acetyl-alpha-D-glucosamine = UDP-N-acetyl-3-O-(1-carboxyvinyl)-alpha-D-glucosamine + phosphate. Its pathway is cell wall biogenesis; peptidoglycan biosynthesis. Functionally, cell wall formation. Adds enolpyruvyl to UDP-N-acetylglucosamine. This chain is UDP-N-acetylglucosamine 1-carboxyvinyltransferase, found in Treponema pallidum (strain Nichols).